The chain runs to 182 residues: Alkyl hydroperoxide reductase AhpD (182 aa).

C132 functions as the Proton donor in the catalytic mechanism. An intrachain disulfide couples C132 to C135. The active-site Cysteine sulfenic acid (-SOH) intermediate is the C135.

It belongs to the AhpD family.

The catalysed reaction is N(6)-[(R)-dihydrolipoyl]-L-lysyl-[lipoyl-carrier protein] + a hydroperoxide = N(6)-[(R)-lipoyl]-L-lysyl-[lipoyl-carrier protein] + an alcohol + H2O. Functionally, antioxidant protein with alkyl hydroperoxidase activity. Required for the reduction of the AhpC active site cysteine residues and for the regeneration of the AhpC enzyme activity. The chain is Alkyl hydroperoxide reductase AhpD from Bradyrhizobium diazoefficiens (strain JCM 10833 / BCRC 13528 / IAM 13628 / NBRC 14792 / USDA 110).